A 359-amino-acid polypeptide reads, in one-letter code: 4-galactosyl-N-acetylglucosaminide 3-alpha-L-fucosyltransferase 9 (359 aa).

The Cytoplasmic portion of the chain corresponds to 1 to 11 (MTSTSKGILRP). A helical; Signal-anchor for type II membrane protein transmembrane segment spans residues 12–32 (FLIVCVILACFMACLLIYIKP). The Lumenal portion of the chain corresponds to 33 to 359 (TNSWVFSPME…VGNLEKWFWN (327 aa)). N-linked (GlcNAc...) asparagine glycosylation occurs at Asn62. The interval 63–168 (ETTILVWVWP…RRDSDIQVPY (106 aa)) is acceptor-binding. Gln75 provides a ligand contact to a beta-D-galactosyl-(1-&gt;4)-N-acetyl-beta-D-glucosaminyl derivative. Disulfide bonds link Cys82–Cys335, Cys91–Cys338, and Cys190–Cys238. N-linked (GlcNAc...) asparagine glycosylation occurs at Asn101. Glu137 contacts a beta-D-galactosyl-(1-&gt;4)-N-acetyl-beta-D-glucosaminyl derivative. The active-site Nucleophile is the Glu137. A GDP-beta-L-fucose-binding site is contributed by Glu137. Asn153 carries N-linked (GlcNAc...) asparagine glycosylation. The GDP-beta-L-fucose site is built by Tyr168, Val192, Ser194, Asn195, Arg202, Val226, Tyr241, Asn246, Tyr252, Glu255, and Lys256. A donor-binding region spans residues 169 to 326 (GFLTVSTNPF…NWRKDFTVNL (158 aa)). Residues 327–359 (PRFWESHACLACDHVKRHQEYKSVGNLEKWFWN) are acceptor-binding.

This sequence belongs to the glycosyltransferase 10 family. In terms of assembly, homodimer. N-glycosylated with complex-type N-glycans.

It localises to the golgi apparatus. The protein resides in the trans-Golgi network membrane. Its subcellular location is the golgi apparatus membrane. The enzyme catalyses a beta-D-galactosyl-(1-&gt;4)-N-acetyl-beta-D-glucosaminyl derivative + GDP-beta-L-fucose = a beta-D-galactosyl-(1-&gt;4)-[alpha-L-fucosyl-(1-&gt;3)]-N-acetyl-beta-D-glucosaminyl derivative + GDP + H(+). The catalysed reaction is an alpha-Neu5Ac-(2-&gt;3)-beta-D-Gal-(1-&gt;4)-beta-D-GlcNAc-(1-&gt;3)-beta-D-Gal-(1-&gt;4)-beta-D-GlcNAc derivative + GDP-beta-L-fucose = an alpha-Neu5Ac-(2-&gt;3)-beta-D-Gal-(1-&gt;4)-beta-D-GlcNAc-(1-&gt;3)-beta-D-Gal-(1-&gt;4)-[alpha-L-Fuc-(1-&gt;3)]-beta-D-GlcNAc derivative + GDP + H(+). It catalyses the reaction alpha-N-glycoloylneuraminosyl-(2-&gt;3)-beta-D-galactosyl-(1-&gt;4)-N-acetyl-beta-D-glucosaminyl-(1-&gt;3)-beta-D-galactosyl-(1-&gt;4)-N-acetyl-beta-D-glucosaminyl-(1-&gt;3)-beta-D-galactosyl-(1-&gt;4)-beta-D-glucosyl-(1&lt;-&gt;1')-ceramide + GDP-beta-L-fucose = alpha-N-glycoloylneuraminosyl-(2-&gt;3)-beta-D-galactosyl-(1-&gt;4)-N-acetyl-beta-D-glucosaminyl-(1-&gt;3)-beta-D-galactosyl-(1-&gt;4)-[alpha-L-fucosyl-(1-&gt;3)]-N-acetyl-beta-D-glucosaminyl-(1-&gt;3)-beta-D-galactosyl-(1-&gt;4)-beta-D-glucosyl-(1&lt;-&gt;1')-ceramide + GDP + H(+). It carries out the reaction alpha-D-galactosyl-(1-&gt;3)-beta-D-galactosyl-(1-&gt;4)-N-acetyl-beta-D-glucosaminyl-(1-&gt;3)-beta-D-galactosyl-(1-&gt;4)-beta-D-glucosyl-(1&lt;-&gt;1')-ceramide + GDP-beta-L-fucose = a neolactoside IV(3)-alpha-Gal,III(3)-alpha-Fuc-nLc4Cer + GDP + H(+). The enzyme catalyses a neolactoside nLc4Cer + GDP-beta-L-fucose = a neolactoside III(3)-alpha-Fuc-nLc4Cer + GDP + H(+). The catalysed reaction is an N-acetyl-alpha-neuraminyl-(2-&gt;3)-beta-D-galactosyl-(1-&gt;4)-N-acetyl-beta-D-glucosaminyl derivative + GDP-beta-L-fucose = an alpha-Neu5Ac-(2-&gt;3)-beta-D-Gal-(1-&gt;4)-[alpha-L-Fuc-(1-&gt;3)]-beta-D-GlcNAc derivative + GDP + H(+). It catalyses the reaction beta-D-Gal-(1-&gt;4)-beta-D-GlcNAc-(1-&gt;3)-beta-D-Gal-(1-&gt;4)-D-Glc + GDP-beta-L-fucose = beta-D-Gal-(1-&gt;4)-[alpha-L-Fuc-(1-&gt;3)]-beta-D-GlcNAc-(1-&gt;3)-beta-D-Gal-(1-&gt;4)-D-Glc + GDP + H(+). It carries out the reaction an alpha-L-Fuc-(1-&gt;2)-beta-D-Gal-(1-&gt;4)-beta-D-GlcNAc derivative + GDP-beta-L-fucose = an alpha-L-Fuc-(1-&gt;2)-beta-D-Gal-(1-&gt;4)-[alpha-L-Fuc-(1-&gt;3)]-beta-D-GlcNAc derivative + GDP + H(+). It functions in the pathway protein modification; protein glycosylation. The protein operates within glycolipid biosynthesis. With respect to regulation, activated by Mn2+. In terms of biological role, catalyzes alpha(1-&gt;3) linkage of fucosyl moiety transferred from GDP-beta-L-fucose to N-acetyl glucosamine (GlcNAc) within type 2 lactosamine (LacNAc, beta-D-Gal-(1-&gt;4)-beta-D-GlcNAc-) glycan attached to glycolipids and N- or O-linked glycoproteins. Fucosylates distal type 2 LacNAc and its fucosylated (H-type 2 LacNAc) and sialylated (sialyl-type 2 LacNAc) derivatives to form Lewis x (Lex) (CD15) and Lewis y (Ley) antigenic epitopes involved in cell adhesion and differentiation. Generates Lex epitopes in the brain, presumably playing a role in the maintenance of neuronal stemness and neurite outgrowth in progenitor neural cells. Fucosylates the internal type 2 LacNAc unit of the polylactosamine chain to form VIM-2 antigen that serves as recognition epitope for SELE. Can also modify milk oligosaccharides in particular type 2 tetrasaccharide LNnT. The sequence is that of 4-galactosyl-N-acetylglucosaminide 3-alpha-L-fucosyltransferase 9 from Cricetulus griseus (Chinese hamster).